The chain runs to 131 residues: CLAVATA3/ESR (CLE)-related protein ESR1 (131 aa).

The signal sequence occupies residues 1 to 26 (MASRMGMVAIVSLFVCALAASTSVNA). The tract at residues 49-131 (RQQQQGGFIG…IGPPPLSDRY (83 aa)) is disordered. Hydroxyproline occurs at positions 81 and 84. O-linked (Ara...) hydroxyproline glycosylation occurs at proline 84.

This sequence belongs to the CLV3/ESR signal peptide family. The O-glycosylation (arabinosylation) of the hydroxyproline Pro-84 enhances binding affinity of the ESR1p peptide for its receptor. Seed endosperm.

The protein resides in the secreted. It is found in the extracellular space. Its function is as follows. Extracellular signal peptide that regulates cell fate. The sequence is that of CLAVATA3/ESR (CLE)-related protein ESR1 from Zea mays (Maize).